A 2009-amino-acid chain; its full sequence is Sodium channel protein type 1 subunit alpha (2009 aa).

The Cytoplasmic segment spans residues 1–128 (MEQTVLVPPG…KIAIKILVHS (128 aa)). Residues 28 to 48 (RIAEEKAKNPKPDKKDDDENG) are compositionally biased toward basic and acidic residues. Residues 28–60 (RIAEEKAKNPKPDKKDDDENGPKPNSDLEAGKN) are disordered. One copy of the I repeat lies at 110-454 (ILTPFNPLRK…QQMLEQLKKQ (345 aa)). A helical transmembrane segment spans residues 129 to 146 (LFSMLIMCTILTNCVFMT). Topologically, residues 147–152 (MSNPPD) are extracellular. The chain crosses the membrane as a helical span at residues 153-177 (WTKNVEYTFTGIYTFESLIKIIARG). Residues 178-188 (FCLEDFTFLRD) lie on the Cytoplasmic side of the membrane. The chain crosses the membrane as a helical span at residues 189–205 (PWNWLDFTVITFAYVTE). At 206-213 (FVDLGNVS) the chain is on the extracellular side. A helical transmembrane segment spans residues 214 to 235 (ALRTFRVLRALKTISVIPGLKT). Over 236–245 (IVGALIQSVK) the chain is Cytoplasmic. The chain crosses the membrane as a helical span at residues 246 to 269 (KLSDVMILTVFCLSVFALIGLQLF). Topologically, residues 270-369 (MGNLRNKCVQ…YGYTSFDTFS (100 aa)) are extracellular. Intrachain disulfides connect cysteine 277–cysteine 345 and cysteine 336–cysteine 351. Asparagine 295, asparagine 301, asparagine 306, and asparagine 338 each carry an N-linked (GlcNAc...) asparagine glycan. Positions 370–384 (WAFLSLFRLMTQDFW) form an intramembrane region, pore-forming. The Extracellular portion of the chain corresponds to 385–397 (ENLYQLTLRAAGK). Residues 398 to 423 (TYMIFFVLVIFLGSFYLINLILAVVA) form a helical membrane-spanning segment. The Cytoplasmic segment spans residues 424-768 (MAYEEQNQAT…HIVNLVVMDP (345 aa)). The interval 455 to 528 (QEAAQQAAAT…EFHKSESEDS (74 aa)) is disordered. Low complexity predominate over residues 456–466 (EAAQQAAATTA). The residue at position 470 (serine 470) is a Phosphoserine. Over residues 479-492 (LSDSSSEASKLSSK) the composition is skewed to low complexity. Basic residues predominate over residues 495–506 (KERRNRRKKRKQ). The span at 507 to 528 (KEQSGGEEKDDDEFHKSESEDS) shows a compositional bias: basic and acidic residues. Serine 523, serine 525, serine 550, serine 551, serine 607, and serine 730 each carry phosphoserine. Residues 584–627 (VGSENDFADDEHSTFEDNESRRDSLFVPRRHGERRNSNLSQTSR) are disordered. Basic and acidic residues predominate over residues 593-607 (DEHSTFEDNESRRDS). The stretch at 750-1022 (CSPYWLKVKH…QIAVDRMHKG (273 aa)) is one II repeat. A helical transmembrane segment spans residues 769–787 (FVDLAITICIVLNTLFMAM). At 788–797 (EHYPMTEHFN) the chain is on the extracellular side. A helical membrane pass occupies residues 798 to 820 (HVLTVGNLVFTGIFTAEMFLKII). Residues 821–830 (AMDPYYYFQE) are Cytoplasmic-facing. The helical transmembrane segment at 831-849 (GWNIFDGFIVTLSLVELGL) threads the bilayer. The Extracellular segment spans residues 850–854 (ANVEG). Residues 855–874 (LSVLRSFRLLRVFKLAKSWP) form a helical membrane-spanning segment. Residues 875 to 891 (TLNMLIKIIGNSVGALG) are Cytoplasmic-facing. Residues 892–912 (NLTLVLAIIVFIFAVVGMQLF) form a helical membrane-spanning segment. Topologically, residues 913–938 (GKSYKDCVCKIATDCKLPRWHMNDFF) are extracellular. Cysteine 921 and cysteine 927 are disulfide-bonded. An intramembrane region (pore-forming) is located at residues 939-952 (HSFLIVFRVLCGEW). The Extracellular segment spans residues 953-965 (IETMWDCMEVAGQ). A disulfide bridge links cysteine 959 with cysteine 968. Residues 966 to 992 (AMCLTVFMMVMVIGNLVVLNLFLALLL) form a helical membrane-spanning segment. The Cytoplasmic segment spans residues 993–1218 (SSFSADNLAA…RTCFRIVEHN (226 aa)). The interval 1129 to 1163 (TEDFSSESDLEESKEKLNESSSSSEGSTVDIGAPA) is disordered. The III repeat unit spans residues 1200–1514 (RGKQWWNLRR…KKYYNAMKKL (315 aa)). The helical transmembrane segment at 1219–1237 (WFETFIVFMILLSSGALAF) threads the bilayer. At 1238-1250 (EDIYIDQRKTIKT) the chain is on the extracellular side. A helical transmembrane segment spans residues 1251-1276 (MLEYADKVFTYIFILEMLLKWVAYGY). Over 1277 to 1278 (QT) the chain is Cytoplasmic. Residues 1279 to 1304 (YFTNAWCWLDFLIVDVSLVSLTANAL) form a helical membrane-spanning segment. At 1305–1313 (GYSELGAIK) the chain is on the extracellular side. A helical membrane pass occupies residues 1314–1332 (SLRTLRALRPLRALSRFEG). Over 1333–1345 (MRVVVNALLGAIP) the chain is Cytoplasmic. Residues 1346-1369 (SIMNVLLVCLIFWLIFSIMGVNLF) traverse the membrane as a helical segment. The Extracellular portion of the chain corresponds to 1370–1415 (AGKFYHCVNTTTGDIFEISEVNNHSDCLKLIERNETARWKNVKVNF). An intrachain disulfide couples cysteine 1376 to cysteine 1396. Residues 1416-1433 (DNVGFGYLSLLQVATFKG) constitute an intramembrane region (pore-forming). Topologically, residues 1434–1457 (WMDIMYAAVDSRNVELQPKYEESL) are extracellular. The chain crosses the membrane as a helical span at residues 1458–1483 (YMYLYFVIFIIFGSFFTLNLFIGVII). At 1484-1541 (DNFNQQKKKFGGQDIFMTEEQKKYYNAMKKLGSKKPQKPIPRPGNKFQGMVFDFVTRQ) the chain is on the cytoplasmic side. Phosphoserine; by PKC is present on serine 1516. Residues 1523-1821 (IPRPGNKFQG…WEKFDPDATQ (299 aa)) form an IV repeat. A helical transmembrane segment spans residues 1542 to 1560 (VFDISIMILICLNMVTMMV). Residues 1561-1571 (ETDDQSDYVTS) lie on the Extracellular side of the membrane. Residues 1561–1571 (ETDDQSDYVTS) are S1-S2 loop of repeat IV. A helical membrane pass occupies residues 1572–1593 (ILSRINLVFIVLFTGECVLKLI). Over 1594-1601 (SLRHYYFT) the chain is Cytoplasmic. Residues 1602-1623 (IGWNIFDFVVVILSIVGMFLAE) form a helical membrane-spanning segment. Positions 1619-1636 (MFLAELIEKYFVSPTLFR) are S3b-S4 loop of repeat IV. The Extracellular portion of the chain corresponds to 1624-1636 (LIEKYFVSPTLFR). A helical transmembrane segment spans residues 1637–1655 (VIRLARIGRILRLIKGAKG). At 1656 to 1665 (IRTLLFALMM) the chain is on the cytoplasmic side. A helical membrane pass occupies residues 1666 to 1688 (SLPALFNIGLLLFLVMFIYAIFG). Topologically, residues 1689-1711 (MSNFAYVKREVGIDDMFNFETFG) are extracellular. An intramembrane region (pore-forming) is located at residues 1712–1726 (NSMICLFQITTSAGW). Over 1727–1759 (DGLLAPILNSKPPDCDPNKVNPGSSVKGDCGNP) the chain is Extracellular. Cysteines 1741 and 1756 form a disulfide. A helical transmembrane segment spans residues 1760 to 1788 (SVGIFFFVSYIIISFLVVVNMYIAVILEN). The Cytoplasmic segment spans residues 1789–2009 (FSVATEESAE…EGKDEKAKGK (221 aa)). Residues 1915 to 1944 (EEVSAVIIQRAYRRHLLKRTVKQASFTYNK) form the IQ domain. The segment at 1984-2009 (PSYDRVTKPIVEKHEQEGKDEKAKGK) is disordered. Positions 1988–2009 (RVTKPIVEKHEQEGKDEKAKGK) are enriched in basic and acidic residues.

The protein belongs to the sodium channel (TC 1.A.1.10) family. Nav1.1/SCN1A subfamily. As to quaternary structure, the Nav1.1 voltage-gated sodium channel consists of an ion-conducting alpha subunit SCN1A which is functional on its own regulated by one or more beta-1 (SCN1B), beta-2 (SCN2B), beta-3 (SCN3B) and beta-4 (SCN4B) subunits. SCN1B and SCN3B are non-covalently associated with SCN1A. SCN2B and SCN4B are disulfide-linked to SCN1A. SCN1B regulates both the expression at the plasma membrane and the voltage dependence of Nav1.1 inactivation. SCN3B and SCN4B reduce Nav1.1 conductance. Probably interacts with TMEM233; modulates the gating properties of NaV1.1. Interacts with FGF13; regulates the steady-state inactivation of Nav.1.1. In terms of processing, phosphorylation at Ser-1516 by PKC in a highly conserved cytoplasmic loop slows inactivation of the sodium channel and reduces peak sodium currents. In terms of tissue distribution, present in cerebellar Purkinje neurons (at protein level). Expressed by myelinated, non-C-fiber neurons in sensory ganglia.

The protein resides in the cell membrane. It catalyses the reaction Na(+)(in) = Na(+)(out). Its activity is regulated as follows. Activated by the spider toxins Hm1a and Hm1b (H.maculata, AC P60992 and AC P0DOC5) eliciting acute pain and mechanical allodynia. Pore-forming subunit of Nav1.1, a voltage-gated sodium (Nav) channel that directly mediates the depolarizing phase of action potentials in excitable membranes. Navs, also called VGSCs (voltage-gated sodium channels) or VDSCs (voltage-dependent sodium channels), operate by switching between closed and open conformations depending on the voltage difference across the membrane. In the open conformation they allow Na(+) ions to selectively pass through the pore, along their electrochemical gradient. The influx of Na(+) ions provokes membrane depolarization, initiating the propagation of electrical signals throughout cells and tissues. By regulating the excitability of neurons, ensures that they respond appropriately to synaptic inputs, maintaining the balance between excitation and inhibition in brain neural circuits. Nav1.1 plays a role in controlling the excitability and action potential propagation from somatosensory neurons, thereby contributing to the sensory perception of mechanically-induced pain. The chain is Sodium channel protein type 1 subunit alpha from Mus musculus (Mouse).